Reading from the N-terminus, the 455-residue chain is Probable glycine dehydrogenase (decarboxylating) subunit 1 (455 aa).

Belongs to the GcvP family. N-terminal subunit subfamily. As to quaternary structure, the glycine cleavage system is composed of four proteins: P, T, L and H. In this organism, the P 'protein' is a heterodimer of two subunits.

The catalysed reaction is N(6)-[(R)-lipoyl]-L-lysyl-[glycine-cleavage complex H protein] + glycine + H(+) = N(6)-[(R)-S(8)-aminomethyldihydrolipoyl]-L-lysyl-[glycine-cleavage complex H protein] + CO2. Functionally, the glycine cleavage system catalyzes the degradation of glycine. The P protein binds the alpha-amino group of glycine through its pyridoxal phosphate cofactor; CO(2) is released and the remaining methylamine moiety is then transferred to the lipoamide cofactor of the H protein. This chain is Probable glycine dehydrogenase (decarboxylating) subunit 1, found in Francisella tularensis subsp. tularensis (strain FSC 198).